Reading from the N-terminus, the 492-residue chain is Cytochrome P450 26A1 (492 aa).

Residue Cys437 participates in heme binding.

This sequence belongs to the cytochrome P450 family. The cofactor is heme.

Its subcellular location is the endoplasmic reticulum membrane. It localises to the microsome membrane. The enzyme catalyses all-trans-retinoate + reduced [NADPH--hemoprotein reductase] + O2 = all-trans-(4S)-hydroxyretinoate + oxidized [NADPH--hemoprotein reductase] + H2O + H(+). It catalyses the reaction all-trans-(4S)-hydroxyretinoate + reduced [NADPH--hemoprotein reductase] + O2 = all-trans-(4S,16)-dihydroxyretinoate + oxidized [NADPH--hemoprotein reductase] + H2O + H(+). It carries out the reaction all-trans-retinoate + reduced [NADPH--hemoprotein reductase] + O2 = all-trans-18-hydroxyretinoate + oxidized [NADPH--hemoprotein reductase] + H2O + H(+). A cytochrome P450 monooxygenase involved in the metabolism of retinoates (RAs), the active metabolites of vitamin A, and critical signaling molecules in animals. RAs exist as at least four different isomers: all-trans-RA (atRA), 9-cis-RA, 13-cis-RA, and 9,13-dicis-RA, where atRA is considered to be the biologically active isomer, although 9-cis-RA and 13-cis-RA also have activity. Catalyzes the hydroxylation of atRA primarily at C-4 and C-18, thereby contributing to the regulation of atRA homeostasis and signaling. Hydroxylation of atRA limits its biological activity and initiates a degradative process leading to its eventual elimination. Involved in the convertion of atRA to all-trans-4-oxo-RA. Able to metabolize other RAs such as 9-cis, 13-cis and 9,13-di-cis RA. Can oxidize all-trans-13,14-dihydroretinoate (DRA) to metabolites which could include all-trans-4-oxo-DRA, all-trans-4-hydroxy-DRA, all-trans-5,8-epoxy-DRA, and all-trans-18-hydroxy-DRA. May play a role in the oxidative metabolism of xenobiotics such as tazarotenic acid. The sequence is that of Cytochrome P450 26A1 (CYP26A1) from Gallus gallus (Chicken).